The following is a 195-amino-acid chain: 3-isopropylmalate dehydratase small subunit (195 aa).

Belongs to the LeuD family. LeuD type 1 subfamily. As to quaternary structure, heterodimer of LeuC and LeuD.

It carries out the reaction (2R,3S)-3-isopropylmalate = (2S)-2-isopropylmalate. It participates in amino-acid biosynthesis; L-leucine biosynthesis; L-leucine from 3-methyl-2-oxobutanoate: step 2/4. Its function is as follows. Catalyzes the isomerization between 2-isopropylmalate and 3-isopropylmalate, via the formation of 2-isopropylmaleate. In Koribacter versatilis (strain Ellin345), this protein is 3-isopropylmalate dehydratase small subunit.